A 2187-amino-acid polypeptide reads, in one-letter code: Non-reducing polyketide synthase phnA (2187 aa).

The interval 17–255 (LLFGDLSLAH…KYLDIDSPYH (239 aa)) is N-terminal acylcarrier protein transacylase domain (SAT). A Ketosynthase family 3 (KS3) domain is found at 383-819 (HSKIAIVGYS…GGNTAMLIED (437 aa)). Catalysis depends on for beta-ketoacyl synthase activity residues Cys555, His690, and His735. The interval 926–1226 (RVAFAFTGQG…GMVKGTIDSR (301 aa)) is malonyl-CoA:ACP transacylase (MAT) domain. Ser1021 (for acyl/malonyl transferase activity) is an active-site residue. The tract at residues 1321-1637 (PCAQQIVEEF…PRRALDHLLP (317 aa)) is product template (PT) domain. Positions 1324 to 1458 (QQIVEEFHDS…LDVVLYPGQQ (135 aa)) are N-terminal hotdog fold. In terms of domain architecture, PKS/mFAS DH spans 1324–1633 (QQIVEEFHDS…FQGVPRRALD (310 aa)). Residue His1356 is the Proton acceptor; for dehydratase activity of the active site. A C-terminal hotdog fold region spans residues 1486–1633 (TETHLIKRGM…FQGVPRRALD (148 aa)). The active-site Proton donor; for dehydratase activity is Asp1546. Low complexity predominate over residues 1652–1669 (KAPVAAVAPPRTPTKAAP). Residues 1652 to 1681 (KAPVAAVAPPRTPTKAAPQSRQAAPKQKRS) form a disordered region. Carrier domains follow at residues 1684 to 1758 (SDVF…SNSD) and 1796 to 1874 (SSES…YNVM). Ser1718 carries the O-(pantetheine 4'-phosphoryl)serine modification. Residues 1754–1796 (LSNSDEDDTPSGDSSTYEDSESQITSPASSVGPETPGGGEFGS) form a disordered region. A compositionally biased stretch (acidic residues) spans 1757–1774 (SDEDDTPSGDSSTYEDSE). An O-(pantetheine 4'-phosphoryl)serine modification is found at Ser1834. Positions 1906–2183 (SSLPQATSIL…PEMGEAVAEF (278 aa)) are thioesterase (TE) domain. The active-site For thioesterase activity is the Ser2009.

It catalyses the reaction 6 malonyl-CoA + acetyl-CoA + 5 H(+) = 3,6,7,9-tetrahydroxy-3-methyl-2,3-dihydro-1H-naphtho[2,1-b]pyran-1-one + 6 CO2 + 7 CoA + H2O. The protein operates within secondary metabolite biosynthesis. Non-reducing polyketide synthase; part of the gene cluster that mediates the biosynthesis of phenalenones such as herqueinone, compounds that have been reported to treat tumors, bacterial infections and/or mycoses, and rheumatic diseases. The non-reducing polyketide synthase phnA synthesizes the heptaketide backbone and cyclizes it into the angular, hemiketal-containing naphtho-gamma-pyrone prephenalenone. The product template (PT) domain of phnA catalyzes only the C4-C9 aldol condensation, which is unprecedented among known PT domains. The transformation of prephenalenone to phenalenones requires an FAD-dependent monooxygenase phnB, which catalyzes the C2 aromatic hydroxylation of prephenalenone and ring opening of the gamma-pyrone ring simultaneously. Subsequent intramolecular deprotonation of C3 phenolic oxygen accelerates phenalenone ring closure to yield the tricyclic phenalenone core with a C2 hydroxylation. The prenyltransferase phnF further catalyzes reverse C-prenylation of phenalenone by direct electrophilic substitution at C6, or possibly via first a forward O-prenylation of a neighboring phenol in phenalenone, followed by a Claisen rearrangement. The hydroalkoxylation enzyme phnH catalyzes the 5-exo-trig cyclization via acid catalysis after the spontaneous deprotonation of 7-OH, which leads to the formation of the dihydrobenzofuran atrovenetin. Atrovenetin is further converted to deoxyherqueinone by the O-methyltransferase phnC which can methylate C2-OH to stabilize the northern portion of the phenalenone core. Finally, the oxidoreductase phnG converts deoxyherqueinone to herqueinone via C6 hydroxylation. This is Non-reducing polyketide synthase phnA from Penicillium herquei.